The following is a 905-amino-acid chain: MSEFRIHHDVNELLSLLRIHGGDGAEVYIDLLQKNRTPYVTTTVSAHSAKVKIAEFSRTPEDFLKKYDELKSKNTRNLDPLVYLLSKLTEDKETLQFLQQNAKERAELAASAATSNTTSFSIPVAASKMSTQELEELRKQLGSVSTGSTLQQSLELTRKMLRDKQNKKNSGQPLPVFPAWVYERPTLAGDFLIGSGLSSDTVLPIGTLPLASQESAVVEDLLYVLVGVDGRYITAQPLAGRQNRTFLVDPNLDLSIRELVNRILPVAASYSTVTRFIEEKSSFEYGQVNHALAAAMRTLVKEYLILVTQLEQLHRQGLLSLQKLWFYIQPAMRTIDILASLATSVDKGECVGGSTLSLLHDRSFNYTGDSQAQELCLYLTKAASAPYFEILEKWIYRGIIHDPYSEFMVEEHELRKEKIQEDYNDKYWDQRYTVLPQQIPSFLQKVAGKILSTGKYLNVVRECGHDVTCPVAKEIIYTLKERAYVEQIEKAFNYASKVLLDFLMEEKELVAHLRSIKRYFLMDQGDFFVHFMDLTEEELRKPVEDIILTRLEALLELALRMSTANTDPFKDDLKIELMPHDLITQLLRVLAIETKQEKAMTHADPTELTLSGLEAFSFDYMVKWPLSLIINRKALTRYQMLFRHMFYCKHVERQLCSVWISNKTAKQHALHSAKWFAGAFTLRQRMLNFVQNIQYYMMFEVMEPTWHILEKNLKSASNIDDVLGHHTSFLDNCLKDCMLTNPELLKVFSKLMSVCVMFTNCMQKFTQSMKLDSELGRLTLDQGSVQGPPTETERIEDRPRKELTRKHLSEHVDAPQLASGFEATINNFDKNFSAHLLDLLARLSVYSTSDCEHGMASVISRLDFNGFYAERLERLSAERSQKAAPQVPVPRGPSAPAPRVAIPAQ.

Position 83 is a phosphotyrosine (Tyr-83). The segment at 877–905 (AERSQKAAPQVPVPRGPSAPAPRVAIPAQ) is disordered. Residues 887-896 (VPVPRGPSAP) show a composition bias toward pro residues.

The protein belongs to the TUBGCP family. Component of the gamma-tubulin ring complex (gTuRC) consisting of TUBGCP2, TUBGCP3, TUBGCP4, TUBGCP5 and TUBGCP6 and gamma-tubulin TUBG1 or TUBG2. TUBGCP2, TUBGCP3, TUBGCP4, TUBGCP5 and TUBGCP6 assemble in a 5:5:2:1:1 stoichiometry; each is associated with a gamma-tubulin, thereby arranging 14 gamma-tubulins in a helical manner. Gamma-tubulin at the first position is blocked by TUBGCP3 at the last position, allowing 13 protafilaments to grow into a microtubule. The gTuRC (via TUBGCP3 and TUBGCP6) interacts with ACTB and MZT1; the interactions form a luminal bridge that stabilizes the initial structure during complex assembly. The gTuRC (via TUBGCP2) interacts with MZT2A/MZT2B and CDK5RAP2 (via CM1 motif); the interactions play a role in gTuRC activation. Interacts with ATF5; the ATF5:PCNT:polyglutamylated tubulin (PGT) tripartite unites the mother centriole and the pericentriolar material (PCM) in the centrosome.

It localises to the cytoplasm. The protein localises to the cytoskeleton. Its subcellular location is the microtubule organizing center. It is found in the centrosome. In terms of biological role, component of the gamma-tubulin ring complex (gTuRC) which mediates microtubule nucleation. The gTuRC regulates the minus-end nucleation of alpha-beta tubulin heterodimers that grow into microtubule protafilaments, a critical step in centrosome duplication and spindle formation. Plays a role in neuronal migration. The polypeptide is Gamma-tubulin complex component 2 (Tubgcp2) (Mus musculus (Mouse)).